A 98-amino-acid chain; its full sequence is mRNA interferase toxin MqsR (98 aa).

In terms of assembly, might be a dimer. Also reported to be a monomer. Crystallizes as a heterotetramer with MqsA, MqsR-MqsA(2)-MqsR. Purifies as a possible heterohexamer of 2 MqsR dimers and 1 MqsA dimer. When the 2 dissociate the MsqR mRNA interferase becomes active.

Functionally, toxic component of a type II toxin-antitoxin (TA) system. Plays a significant role in the control of biofilm formation and induction of persister cells in the presence of antibiotics. An mRNA interferase which has been reported to be translation-independent. It has also been reported to be translation-dependent. Cleavage has been reported to occur on either side of G in the sequence GCU. Also reported to cleave after C in GC(A/U) sequences. There are only 14 genes in E.coli W3110 (and probably also MG1655) that do not have a GCU sequence and thus are resistant to the mRNA interferase activity; among these is the gene for toxin GhoT. Overexpression of MqsR causes cessation of cell growth and inhibits cell proliferation via inhibition of translation as well as increasing persister cell formation; these effects are overcome by concomitant or subsequent expression of antitoxin MqsA. Cross-talk can occur between different TA systems. Ectopic expression of this toxin induces transcription of the relBEF TA system operon with specific cleavage of the relBEF mRNA produced. Regulates the expression of GhoT/GhoS, a type V TA system. Persistence depends on toxin GhoT activity, which MqsR controls at the post-transcriptional level by selectively degrading the antitoxin ghoS segment of the ghoST mRNA. Overexpression leads to a dramatic increase in tolerance to the antibiotic ofloxacin. This TA system mediates cell growth during bile acid deoxycholate stress by degrading mRNA for probable deoxycholate-binding protein YgiS; bile acid detergents such as deoxycholate are important for host defense against bacterial growth in the gall bladder and duodenum. Initially reported to act as a cotranscription factor with MqsA. Following further experiments, the MqsR-MqsA complex does not bind DNA and all reported data are actually due to a small fraction of free MqsA alone binding DNA. Addition of MqsR to a preformed MqsA-promoter DNA complex causes dissociation of the MqsA-DNA complex, probably causing derepression of MqsA-repressed transcripts. Does not bind DNA in the presence or absence of MqsA. The polypeptide is mRNA interferase toxin MqsR (Escherichia coli (strain K12)).